Reading from the N-terminus, the 146-residue chain is uncharacterized protein (146 aa).

The signal sequence occupies residues 1 to 17 (MKRLLILTALLPFVGFA). 2 disordered regions span residues 27–54 (NQPGYQIPSQQRMQTQMQTQQIQQKGML) and 70–146 (ENQI…TIGP). Residues 32-54 (QIPSQQRMQTQMQTQQIQQKGML) are compositionally biased toward low complexity. The span at 77–118 (SQRVLQSQPGERNPARQQMLPNTNGGMLNSNRNPDSSLNQQH) shows a compositional bias: polar residues.

This is an uncharacterized protein from Escherichia coli (strain K12).